We begin with the raw amino-acid sequence, 376 residues long: tRNA-specific 2-thiouridylase MnmA (376 aa).

ATP-binding positions include 14-21 and Met40; that span reads GMSGGVDS. The segment at 100–102 is interaction with target base in tRNA; that stretch reads NPD. Cys105 serves as the catalytic Nucleophile. Cys105 and Cys202 are disulfide-bonded. Residue Gly129 participates in ATP binding. The interaction with tRNA stretch occupies residues 152–154; it reads KDQ. Cys202 functions as the Cysteine persulfide intermediate in the catalytic mechanism. The segment at 315–316 is interaction with tRNA; that stretch reads RY.

This sequence belongs to the MnmA/TRMU family.

The protein resides in the cytoplasm. It catalyses the reaction S-sulfanyl-L-cysteinyl-[protein] + uridine(34) in tRNA + AH2 + ATP = 2-thiouridine(34) in tRNA + L-cysteinyl-[protein] + A + AMP + diphosphate + H(+). Its function is as follows. Catalyzes the 2-thiolation of uridine at the wobble position (U34) of tRNA, leading to the formation of s(2)U34. The protein is tRNA-specific 2-thiouridylase MnmA of Lactococcus lactis subsp. cremoris (strain MG1363).